We begin with the raw amino-acid sequence, 483 residues long: Dual specificity protein phosphatase CDC14C (483 aa).

The tract at residues methionine 1–aspartate 45 is disordered. Positions methionine 1–aspartate 53 match the Nucleolar localization signal motif. Residues alanine 12–serine 26 show a composition bias toward low complexity. Positions proline 43–asparagine 197 are a. The segment at serine 198–glutamate 211 is linker. The interval asparagine 212–lysine 378 is b. The 161-residue stretch at glycine 213–phenylalanine 373 folds into the Tyrosine-protein phosphatase domain. Cysteine 313 serves as the catalytic Phosphocysteine intermediate. Positions glutamine 407 to glutamine 426 are disordered. Positions aspartate 408–isoleucine 421 are enriched in acidic residues. Residues isoleucine 444 to valine 466 form a helical membrane-spanning segment.

It belongs to the protein-tyrosine phosphatase family. Non-receptor class CDC14 subfamily.

Its subcellular location is the membrane. The protein resides in the nucleus. The protein localises to the nucleolus. It localises to the cytoplasm. It is found in the cytoskeleton. It catalyses the reaction O-phospho-L-tyrosyl-[protein] + H2O = L-tyrosyl-[protein] + phosphate. It carries out the reaction O-phospho-L-seryl-[protein] + H2O = L-seryl-[protein] + phosphate. The enzyme catalyses O-phospho-L-threonyl-[protein] + H2O = L-threonyl-[protein] + phosphate. Functionally, dual-specificity phosphatase. Preferentially dephosphorylates proteins modified by proline-directed kinases. The chain is Dual specificity protein phosphatase CDC14C from Symphalangus syndactylus (Siamang).